We begin with the raw amino-acid sequence, 465 residues long: MKIVVSRGLDLSLKGAPKESGFCGKVDPTYVSVDLRPFAPLPLEVKVTPGDQVTAGSPLAEYKLFSGVFITSPVDGEVVEIRRGNKRALLEIVIKKKPGISQTKFSYDLQSLTQKDLLEVFKKEGLFALFKQRPFDIPALPTQSPRDVFINLADNRPFTPSVEKHLSLFSSKEDGYYIFVVGVQAIAKLFGLKPHIISTDRLTLPTQDLVSIAHLHTIDGPFPSGSPSTHIHHIARIRNERDVVFTISFQEVLSIGHLFLKGFVLGQQIVALAGSALPPSQRKYLITAKGASFFDLLPKDIFSSDEITLISGDPLTGRLCKKEENPCLGMRDHTITLLPNPKTRESFSFLRLGWNKLTVTRTYLSGFFKRKRVFMDMDTNMHGEKRPIIDAEIYERVSAIPVPVALIIKALETQNFEEACRLGLLEVAPEDFALPTFIDPSKTEMFSIVKESLLRYAKENVVTSS.

It belongs to the NqrA family. In terms of assembly, composed of six subunits; NqrA, NqrB, NqrC, NqrD, NqrE and NqrF.

It carries out the reaction a ubiquinone + n Na(+)(in) + NADH + H(+) = a ubiquinol + n Na(+)(out) + NAD(+). NQR complex catalyzes the reduction of ubiquinone-1 to ubiquinol by two successive reactions, coupled with the transport of Na(+) ions from the cytoplasm to the periplasm. NqrA to NqrE are probably involved in the second step, the conversion of ubisemiquinone to ubiquinol. The polypeptide is Na(+)-translocating NADH-quinone reductase subunit A (Chlamydia trachomatis serovar L2b (strain UCH-1/proctitis)).